The chain runs to 426 residues: MATIEFIEAREILDSRGNPTVEVEMILDDGTQARAAVPSGASTGQFEAVELRDGDKKRYSGKGVLKAVENVNEKIAEEVLGCDASEQRIIDQIMIELDGSDNKGKLGANAILGVSLAAAHAAADCAELPLYQYLGGPNSHVLPVPMMNILNGGAHADSDVDIQEFMIAPIGAESFKQAYEWGAAVYHSLKKVLKDKGLATGLGDEGGFAPNLPSNAAALDLILDAIKAAGFEPGKDVALALDVAASEFFEDGKYTFEGQAKTSAEMIAYYEGLIAKYPLVSIEDPLDEEDWDGWAEFTKKLGEKIQIVGDDLFVTNPKRLAKGIETKAANALLVKVNQIGSLSETIDAVELAHRNGYRCMMSHRSGETEDTTIADLAVALSTGQIKSGAPARGERIAKYNQLLRIEEELGDSAEYAGASAFPRFQA.

Glutamine 163 provides a ligand contact to (2R)-2-phosphoglycerate. The active-site Proton donor is glutamate 205. Positions 242, 283, and 310 each coordinate Mg(2+). Residues lysine 335, arginine 364, serine 365, and lysine 386 each coordinate (2R)-2-phosphoglycerate. Residue lysine 335 is the Proton acceptor of the active site.

This sequence belongs to the enolase family. The cofactor is Mg(2+).

It is found in the cytoplasm. Its subcellular location is the secreted. It localises to the cell surface. The catalysed reaction is (2R)-2-phosphoglycerate = phosphoenolpyruvate + H2O. It functions in the pathway carbohydrate degradation; glycolysis; pyruvate from D-glyceraldehyde 3-phosphate: step 4/5. Catalyzes the reversible conversion of 2-phosphoglycerate (2-PG) into phosphoenolpyruvate (PEP). It is essential for the degradation of carbohydrates via glycolysis. The sequence is that of Enolase from Cutibacterium acnes (strain DSM 16379 / KPA171202) (Propionibacterium acnes).